The chain runs to 296 residues: Isoprenyl transferase (296 aa).

A compositionally biased stretch (basic residues) spans 1–11; the sequence is MATERNRRRKG. The interval 1–29 is disordered; it reads MATERNRRRKGSYPQLPPAPDDYPTFPDK. The active site involves Asp-76. Asp-76 is a binding site for Mg(2+). Substrate contacts are provided by residues 77–80, Trp-81, Arg-89, His-93, and 121–123; these read GNGR and STE. The active-site Proton acceptor is the Asn-124. Residues Trp-125, Arg-127, Arg-244, and 250–252 contribute to the substrate site; that span reads RAS. Residue Glu-263 participates in Mg(2+) binding.

The protein belongs to the UPP synthase family. In terms of assembly, homodimer. Mg(2+) serves as cofactor.

Catalyzes the condensation of isopentenyl diphosphate (IPP) with allylic pyrophosphates generating different type of terpenoids. The sequence is that of Isoprenyl transferase from Mycolicibacterium parafortuitum (Mycobacterium parafortuitum).